The chain runs to 541 residues: Major facilitator-type transporter ecdD (541 aa).

A helical membrane pass occupies residues 15-35 (AWPAILISGFVAFGGILFGYD). Residue N64 is glycosylated (N-linked (GlcNAc...) asparagine). The next 4 membrane-spanning stretches (helical) occupy residues 72 to 92 (AIVSILSAGTFFGALGASPMG), 106 to 126 (GIFVLGVVLQTIATSIPPFLA), 129 to 149 (FFAGLGVGLISALVPLYQSET), and 156 to 176 (GFIVGAYQFAITVGLLLASVL). N-linked (GlcNAc...) asparagine glycans are attached at residues N178 and N184. A helical membrane pass occupies residues 191-211 (IPIAVQFAWSIILVGGMLILP). N253 is a glycosylation site (N-linked (GlcNAc...) asparagine). 6 consecutive transmembrane segments (helical) span residues 277–297 (LVTGCLLQALQQLSGINFIMY), 313–333 (VITLITNCVNVGSTLPGLYAI), 340–360 (PVLLTGAIGMAVSQLLVAVLG), 384–404 (IAFICLYIFFFAASWGPSAWV), 418–440 (SLSMTTATNWLLNWALSFSTPYL), and 454–474 (IFFIWFGCCFLCIGFVHFMIY).

Belongs to the major facilitator superfamily. Sugar transporter (TC 2.A.1.1) family.

It is found in the membrane. The sequence is that of Major facilitator-type transporter ecdD from Aspergillus rugulosus (Emericella rugulosa).